The primary structure comprises 216 residues: Peptide methionine sulfoxide reductase MsrA (216 aa).

Residue Cys-57 is part of the active site.

It belongs to the MsrA Met sulfoxide reductase family.

It carries out the reaction L-methionyl-[protein] + [thioredoxin]-disulfide + H2O = L-methionyl-(S)-S-oxide-[protein] + [thioredoxin]-dithiol. It catalyses the reaction [thioredoxin]-disulfide + L-methionine + H2O = L-methionine (S)-S-oxide + [thioredoxin]-dithiol. Has an important function as a repair enzyme for proteins that have been inactivated by oxidation. Catalyzes the reversible oxidation-reduction of methionine sulfoxide in proteins to methionine. This chain is Peptide methionine sulfoxide reductase MsrA, found in Agrobacterium fabrum (strain C58 / ATCC 33970) (Agrobacterium tumefaciens (strain C58)).